A 291-amino-acid chain; its full sequence is UPF0276 protein VV3194 (291 aa).

It belongs to the UPF0276 family.

This is UPF0276 protein VV3194 from Vibrio vulnificus (strain YJ016).